A 466-amino-acid polypeptide reads, in one-letter code: Putative transcription factor bHLH041 (466 aa).

3 disordered regions span residues 108 to 129 (PANS…SLSP), 194 to 213 (LTGP…KGRA), and 260 to 289 (RENA…TQLQ). Low complexity predominate over residues 120–129 (PSSSSSSLSP). A compositionally biased stretch (gly residues) spans 268–279 (EGSGGSGGGGRY). The 50-residue stretch at 285–334 (ATQLQHMISERKRREKLNESFQALRSLLPPGTKKDKASVLSIAREQLSSL) folds into the bHLH domain.

In terms of assembly, homodimer.

Its subcellular location is the nucleus. The chain is Putative transcription factor bHLH041 (BHLH41) from Arabidopsis thaliana (Mouse-ear cress).